Consider the following 20-residue polypeptide: FLAKNVAKKLVSHVAKKQLE.

Glu-20 is subject to Glutamic acid 1-amide.

Expressed by the venom gland.

It localises to the secreted. The sequence is that of Short cationic peptide-4d from Cupiennius salei (American wandering spider).